Reading from the N-terminus, the 503-residue chain is MDVVARFMVSYSGTACAISLFIFGITLLFPFHKSQSFVCMNSHSWDIFRNKAKREFESNAEKLIKDALRKGLTAFQLVTNMGTYLILADQYAEELRNDKRLSAYDALNDVILLELPGLETMFQGSLHNHVSPTAIHAMNRELVHLTRALSDEANHRLQTQWTDSSEWHTVSIHDTVLALVAQMTTRAFVGAELCRNAEWLDIAINFTINRAIAVQAVQAWPWILQPVVHWFLPTCKAVRRQIQRARTILMPVLERERQTMHRKDSSSDRIFSTLTFIDQYAQGSRYDATMAQLRLTAVSVLTTSDMVEKVLARICEHPELIQPLREEVVSVFESSGLHHKSLLKLTLMESVMKESQRLEPATLISMFRAAKKTVTLQDGTTIPKGTRLAFANDLRLDPELYPDPETFDGYRFERMRKDPEQAKLAPFTKTRTSHLAFGHGKHACPGRFLSCDEAKLILCHILLKYDFKALDGRVPDLHVRSMFIQRDTGGMLSVRRRQEEVTL.

Residues 11-31 (YSGTACAISLFIFGITLLFPF) form a helical membrane-spanning segment. The N-linked (GlcNAc...) asparagine glycan is linked to Asn-205. Cys-444 lines the heme pocket.

Belongs to the cytochrome P450 family. Heme is required as a cofactor.

The protein localises to the membrane. Its pathway is alkaloid biosynthesis. In terms of biological role, cytochrome P450 monooxygenase; part of the gene cluster that mediates the biosynthesis of the mycotoxin meleagrin. The first stage is catalyzed by the dipeptide synthase roqA which condenses histidine and tryptophan to produce histidyltryptophanyldiketopiperazine (HTD). HTD is then converted to roquefortine C through two possible pathways. In the first pathway, prenyltransferase roqD transforms HTD to the intermediate roquefortine D, which is in turn converted to roquefortine C by the cytochrome P450 monooxygenase roqR. In the second pathway, HTD is first converted to the intermediate dehydrohistidyltryptophanyldi-ketopiperazine (DHTD) by roqR which is then prenylated by roqD to form roquefortine C. Roquefortine C can be further transformed to meleagrin via three more reactions including oxydation to glandicolin A by roqM, which is further reduced to glandicoline B by roqO. Finally, glandicoline B is converted to meleagrin by the glandicoline B O-methyltransferase roqN. More studies identified further branching and additional metabolites produced by the roquefortine/meleagrin cluster, including roquefortine F, roquefortine L, roquefortine M, roquefortine N and neoxaline. The protein is Cytochrome P450 monooxygenase roqO of Penicillium rubens (strain ATCC 28089 / DSM 1075 / NRRL 1951 / Wisconsin 54-1255) (Penicillium chrysogenum).